Reading from the N-terminus, the 276-residue chain is Undecaprenyl-diphosphatase (276 aa).

Helical transmembrane passes span 1–21, 41–61, 97–117, 121–141, 155–175, 200–220, 231–251, and 256–276; these read MHWL…FLPV, LLLD…VFFA, ALLI…FHKI, LFAS…LLWA, VTWG…LPGI, FLLS…DASA, LGGI…LAIV, and LWWF…ANFV.

This sequence belongs to the UppP family.

Its subcellular location is the cell inner membrane. It catalyses the reaction di-trans,octa-cis-undecaprenyl diphosphate + H2O = di-trans,octa-cis-undecaprenyl phosphate + phosphate + H(+). Its function is as follows. Catalyzes the dephosphorylation of undecaprenyl diphosphate (UPP). Confers resistance to bacitracin. This Desulfatibacillum aliphaticivorans protein is Undecaprenyl-diphosphatase.